A 100-amino-acid polypeptide reads, in one-letter code: MDLTPREKDKLLIFTAALLAERRRARGLKLNHPEAVALITAAILEGARDGQSVAQLMSAGQQVLTRADVMDGVAEMIPDIQVEATFPDGTKLVTVHQPIA.

It belongs to the urease gamma subunit family. Heterotrimer of UreA (gamma), UreB (beta) and UreC (alpha) subunits. Three heterotrimers associate to form the active enzyme.

The protein resides in the cytoplasm. The enzyme catalyses urea + 2 H2O + H(+) = hydrogencarbonate + 2 NH4(+). It functions in the pathway nitrogen metabolism; urea degradation; CO(2) and NH(3) from urea (urease route): step 1/1. The sequence is that of Urease subunit gamma from Methylibium petroleiphilum (strain ATCC BAA-1232 / LMG 22953 / PM1).